The following is a 713-amino-acid chain: G-protein coupled receptor-associated protein LMBRD2 (713 aa).

Topologically, residues Met1–Gly3 are extracellular. A helical transmembrane segment spans residues Val4–Leu21. Over His22–Lys32 the chain is Cytoplasmic. The helical transmembrane segment at Leu33–Pro53 threads the bilayer. Over Leu54–Gly122 the chain is Extracellular. Residues Asn76 and Asn89 are each glycosylated (N-linked (GlcNAc...) asparagine). Residues Ile123 to Met143 traverse the membrane as a helical segment. The Cytoplasmic portion of the chain corresponds to Pro144–Glu167. Residues Asn168–Val188 traverse the membrane as a helical segment. At Asn189 to Gly203 the chain is on the extracellular side. Residues Ile204–Val224 form a helical membrane-spanning segment. At Glu225 to Arg404 the chain is on the cytoplasmic side. The stretch at Lys246–Asn314 forms a coiled coil. Residues Ile405–Phe425 traverse the membrane as a helical segment. At Ser426 to Tyr449 the chain is on the extracellular side. The helical transmembrane segment at Val450–Phe470 threads the bilayer. Residues Arg471 to Ser490 are Cytoplasmic-facing. Residues Leu491–Gly511 traverse the membrane as a helical segment. Topologically, residues Leu512–Val538 are extracellular. The helical transmembrane segment at Leu539–Ile559 threads the bilayer. The Cytoplasmic portion of the chain corresponds to Ala560–Val713. Positions Asp587–Tyr620 form a coiled coil. Positions Lys600–Val713 are disordered. Basic and acidic residues predominate over residues Arg605–Arg629. Residues Thr643 to Ser657 are compositionally biased toward polar residues. Residues Asn658–Leu667 show a composition bias toward basic and acidic residues. Polar residues predominate over residues Ser701–Val713.

The protein belongs to the LIMR family.

It localises to the cell membrane. May associate with G-protein coupled receptors and regulate downstream signaling pathways. The polypeptide is G-protein coupled receptor-associated protein LMBRD2 (lmbrd2) (Xenopus laevis (African clawed frog)).